The sequence spans 230 residues: Orotidine 5'-phosphate decarboxylase (230 aa).

Substrate is bound by residues Asp10, Lys31, 58-67 (DLKLHDIPNT), Thr117, Arg179, Gln188, Gly208, and Arg209. Lys60 acts as the Proton donor in catalysis. The disordered stretch occupies residues 177–196 (GIRPKDASSDDQKRITTPED). Basic and acidic residues predominate over residues 179-196 (RPKDASSDDQKRITTPED).

This sequence belongs to the OMP decarboxylase family. Type 1 subfamily. Homodimer.

The enzyme catalyses orotidine 5'-phosphate + H(+) = UMP + CO2. It participates in pyrimidine metabolism; UMP biosynthesis via de novo pathway; UMP from orotate: step 2/2. Functionally, catalyzes the decarboxylation of orotidine 5'-monophosphate (OMP) to uridine 5'-monophosphate (UMP). The polypeptide is Orotidine 5'-phosphate decarboxylase (Staphylococcus saprophyticus subsp. saprophyticus (strain ATCC 15305 / DSM 20229 / NCIMB 8711 / NCTC 7292 / S-41)).